We begin with the raw amino-acid sequence, 426 residues long: Serine--tRNA ligase (426 aa).

An L-serine-binding site is contributed by 231 to 233 (TLE). An ATP-binding site is contributed by 262 to 264 (RSE). An L-serine-binding site is contributed by E285. 349 to 352 (EISS) is a binding site for ATP. S385 contacts L-serine.

It belongs to the class-II aminoacyl-tRNA synthetase family. Type-1 seryl-tRNA synthetase subfamily. In terms of assembly, homodimer. The tRNA molecule binds across the dimer.

It localises to the cytoplasm. The enzyme catalyses tRNA(Ser) + L-serine + ATP = L-seryl-tRNA(Ser) + AMP + diphosphate + H(+). It catalyses the reaction tRNA(Sec) + L-serine + ATP = L-seryl-tRNA(Sec) + AMP + diphosphate + H(+). Its pathway is aminoacyl-tRNA biosynthesis; selenocysteinyl-tRNA(Sec) biosynthesis; L-seryl-tRNA(Sec) from L-serine and tRNA(Sec): step 1/1. In terms of biological role, catalyzes the attachment of serine to tRNA(Ser). Is also able to aminoacylate tRNA(Sec) with serine, to form the misacylated tRNA L-seryl-tRNA(Sec), which will be further converted into selenocysteinyl-tRNA(Sec). In Malacoplasma penetrans (strain HF-2) (Mycoplasma penetrans), this protein is Serine--tRNA ligase.